Consider the following 392-residue polypeptide: Formate-dependent phosphoribosylglycinamide formyltransferase (392 aa).

Residues 15–16 (EL) and Glu-75 contribute to the N(1)-(5-phospho-beta-D-ribosyl)glycinamide site. Residues Arg-107, Lys-148, 153 to 158 (SSGKGQ), 188 to 191 (EEFL), and Glu-196 each bind ATP. Positions 112–302 (DLAAGELNLR…EFELHLRAVL (191 aa)) constitute an ATP-grasp domain. 2 residues coordinate Mg(2+): Glu-261 and Glu-273. Residues Asp-280, Lys-350, and 357-358 (RR) contribute to the N(1)-(5-phospho-beta-D-ribosyl)glycinamide site.

Belongs to the PurK/PurT family. As to quaternary structure, homodimer.

The catalysed reaction is N(1)-(5-phospho-beta-D-ribosyl)glycinamide + formate + ATP = N(2)-formyl-N(1)-(5-phospho-beta-D-ribosyl)glycinamide + ADP + phosphate + H(+). Its pathway is purine metabolism; IMP biosynthesis via de novo pathway; N(2)-formyl-N(1)-(5-phospho-D-ribosyl)glycinamide from N(1)-(5-phospho-D-ribosyl)glycinamide (formate route): step 1/1. Its function is as follows. Involved in the de novo purine biosynthesis. Catalyzes the transfer of formate to 5-phospho-ribosyl-glycinamide (GAR), producing 5-phospho-ribosyl-N-formylglycinamide (FGAR). Formate is provided by PurU via hydrolysis of 10-formyl-tetrahydrofolate. The polypeptide is Formate-dependent phosphoribosylglycinamide formyltransferase (Synechococcus sp. (strain CC9605)).